The primary structure comprises 566 residues: Protein OBERON 1 (566 aa).

Residues 1–10 show a composition bias toward polar residues; that stretch reads MGTSSGSNLP. Residues 1 to 79 are disordered; that stretch reads MGTSSGSNLP…KTGPDSHDQH (79 aa). Over residues 18–29 the composition is skewed to low complexity; the sequence is QQLQTSLSLVSS. Positions 47–60 are enriched in polar residues; the sequence is ESASSQETWPTSKS. Positions 64–79 are enriched in basic and acidic residues; that stretch reads RKTDSGKTGPDSHDQH. A PHD-type zinc finger spans residues 225 to 289; the sequence is LCMCVICNKF…LFKCRACNHT (65 aa). The stretch at 407–522 forms a coiled coil; the sequence is EEKTRMYKKA…LFEKIKEQES (116 aa). Residues 545–566 are disordered; it reads YNASSPRVDPRSNQRNPFRSNP. Positions 555–566 are enriched in polar residues; it reads RSNQRNPFRSNP.

In terms of assembly, self-interacts. Interacts with OBE2, OBE3 and OBE4. Binds to VPg of pea seed borne mosaic virus (PSbMV), turnip mosaic virus (TuMV) and lettuce mosaic virus (LMV), but not with VPg of tobacco etch virus (TEV), cowpea mosaic virus (CPMV), tomato black ring virus (TBRV) and grapevine fan leaf virus (GFLV). Interacts with RBL. In terms of tissue distribution, expressed in roots, seedlings, stems, leaves, flowers and siliques, especially in the vasculature.

Its subcellular location is the nucleus. It is found in the nucleoplasm. Its function is as follows. Probable transcription factor that acts together with OBE2 for the maintenance and/or establishment of both the shoot and root meristems, probably by controlling the expression of the meristem genes such as WUS, PLT1 and PLT2 and of genes required for auxin responses. Promotes cell meristematic activity via the WUSCHEL-CLAVATA pathway. Involved in the development of the basal pole and in auxin-mediated root and vascular development in the embryo. Confers sensitivity to turnip mosaic virus (TuMV) probably by promoting viral movement and multiplication via interaction with TuMV VPg. This is Protein OBERON 1 from Arabidopsis thaliana (Mouse-ear cress).